A 179-amino-acid polypeptide reads, in one-letter code: Protein HoxT (179 aa).

This is Protein HoxT (hoxT) from Cupriavidus necator (strain ATCC 17699 / DSM 428 / KCTC 22496 / NCIMB 10442 / H16 / Stanier 337) (Ralstonia eutropha).